The following is a 375-amino-acid chain: POU domain, class 3, transcription factor 1-B (375 aa).

Disordered regions lie at residues Met1 to Gln29, Met56 to Ile139, and Met151 to Asp200. Composition is skewed to polar residues over residues Val107–Trp117, Ser129–Ile139, and Met151–His160. Basic and acidic residues predominate over residues Ser162–Val178. The POU-specific domain maps to Glu194 to Asp268. Positions Lys286 to Thr345 form a DNA-binding region, homeobox.

Belongs to the POU transcription factor family. Class-3 subfamily.

The protein localises to the nucleus. Its function is as follows. Acts as a transcription factor. May play a role in neuronal differentiation. The protein is POU domain, class 3, transcription factor 1-B (pou3f1-b) of Xenopus laevis (African clawed frog).